The following is a 729-amino-acid chain: uncharacterized protein (729 aa).

The protein belongs to the mimivirus L515/L516 family.

It is found in the virion. This is an uncharacterized protein from Acanthamoeba polyphaga mimivirus (APMV).